The chain runs to 438 residues: LIM domain-containing protein C4F6.12 (438 aa).

2 disordered regions span residues 1-37 (MHSP…NNLV) and 49-78 (TGGR…TIKQ). Residues 24-37 (SPVSTNGSPLNNLV) are compositionally biased toward polar residues. 2 positions are modified to phosphoserine: S67 and S96. 3 LIM zinc-binding domains span residues 256-316 (KSCH…QFSP), 318-375 (CKHC…NKYA), and 376-435 (VKCK…SVKF).

The protein is LIM domain-containing protein C4F6.12 of Schizosaccharomyces pombe (strain 972 / ATCC 24843) (Fission yeast).